A 361-amino-acid chain; its full sequence is Adenosine kinase (361 aa).

Residues 7 to 15 (PKPKKLKVE) carry the Nuclear localization signal motif. Aspartate 34 provides a ligand contact to adenosine. Position 48 (serine 48) interacts with Mg(2+). A Phosphotyrosine modification is found at tyrosine 76. Residues aspartate 146 and asparagine 147 each contribute to the Mg(2+) site. Adenosine is bound at residue glutamine 305. Aspartate 316 is a catalytic residue. Aspartate 316 acts as the Proton acceptor in catalysis.

This sequence belongs to the carbohydrate kinase PfkB family. Monomer. Requires Mg(2+) as cofactor. In terms of processing, the N-terminus is blocked.

It is found in the nucleus. The enzyme catalyses adenosine + ATP = AMP + ADP + H(+). It functions in the pathway purine metabolism; AMP biosynthesis via salvage pathway; AMP from adenosine: step 1/1. With respect to regulation, activity is inhibited by 5-iodotubercidin and 5'-amino-5'-deoxyadenosine. Its function is as follows. Catalyzes the phosphorylation of the purine nucleoside adenosine at the 5' position in an ATP-dependent manner. Serves as a potential regulator of concentrations of extracellular adenosine and intracellular adenine nucleotides. The polypeptide is Adenosine kinase (ADK) (Cricetulus griseus (Chinese hamster)).